Reading from the N-terminus, the 533-residue chain is 2-isopropylmalate synthase (533 aa).

Residues 8-270 (VIIFDTTLRD…YFNPFLGRPA (263 aa)) form the Pyruvate carboxyltransferase domain. 4 residues coordinate Mn(2+): aspartate 17, histidine 209, histidine 211, and asparagine 245. Positions 409–533 (RLELVQVSCG…KEKTPEMLQV (125 aa)) are regulatory domain.

The protein belongs to the alpha-IPM synthase/homocitrate synthase family. LeuA type 1 subfamily. As to quaternary structure, homodimer. Requires Mn(2+) as cofactor.

It localises to the cytoplasm. The catalysed reaction is 3-methyl-2-oxobutanoate + acetyl-CoA + H2O = (2S)-2-isopropylmalate + CoA + H(+). It functions in the pathway amino-acid biosynthesis; L-leucine biosynthesis; L-leucine from 3-methyl-2-oxobutanoate: step 1/4. Functionally, catalyzes the condensation of the acetyl group of acetyl-CoA with 3-methyl-2-oxobutanoate (2-ketoisovalerate) to form 3-carboxy-3-hydroxy-4-methylpentanoate (2-isopropylmalate). The protein is 2-isopropylmalate synthase of Microcystis aeruginosa.